The following is a 654-amino-acid chain: Fructose-1,6-bisphosphatase class 3 (654 aa).

The disordered stretch occupies residues 288–307 (NPAFKPKKRPDKHERLTQRE). The span at 298 to 307 (DKHERLTQRE) shows a compositional bias: basic and acidic residues.

Belongs to the FBPase class 3 family. Mn(2+) is required as a cofactor.

It carries out the reaction beta-D-fructose 1,6-bisphosphate + H2O = beta-D-fructose 6-phosphate + phosphate. Its pathway is carbohydrate biosynthesis; gluconeogenesis. The sequence is that of Fructose-1,6-bisphosphatase class 3 from Staphylococcus aureus (strain Mu3 / ATCC 700698).